The sequence spans 466 residues: Asparagine--tRNA ligase (466 aa).

This sequence belongs to the class-II aminoacyl-tRNA synthetase family. In terms of assembly, homodimer.

The protein resides in the cytoplasm. It carries out the reaction tRNA(Asn) + L-asparagine + ATP = L-asparaginyl-tRNA(Asn) + AMP + diphosphate + H(+). The protein is Asparagine--tRNA ligase of Salmonella paratyphi A (strain ATCC 9150 / SARB42).